Here is a 602-residue protein sequence, read N- to C-terminus: Glutamine--fructose-6-phosphate aminotransferase [isomerizing] (602 aa).

Cys2 serves as the catalytic Nucleophile; for GATase activity. Positions 2–219 (CGIIGYIGDR…DGEYAILTKD (218 aa)) constitute a Glutamine amidotransferase type-2 domain. 2 consecutive SIS domains span residues 280–420 (VAEE…VLGT) and 453–592 (LAET…PDKP). Residue Lys597 is the For Fru-6P isomerization activity of the active site.

In terms of assembly, homodimer.

Its subcellular location is the cytoplasm. It carries out the reaction D-fructose 6-phosphate + L-glutamine = D-glucosamine 6-phosphate + L-glutamate. Catalyzes the first step in hexosamine metabolism, converting fructose-6P into glucosamine-6P using glutamine as a nitrogen source. This Thermococcus kodakarensis (strain ATCC BAA-918 / JCM 12380 / KOD1) (Pyrococcus kodakaraensis (strain KOD1)) protein is Glutamine--fructose-6-phosphate aminotransferase [isomerizing].